Consider the following 143-residue polypeptide: Transcriptional regulator MraZ (143 aa).

2 SpoVT-AbrB domains span residues 5–47 (SHTP…PMAE) and 76–119 (AADD…DAQR).

It belongs to the MraZ family. In terms of assembly, forms oligomers.

It localises to the cytoplasm. The protein resides in the nucleoid. In Frankia alni (strain DSM 45986 / CECT 9034 / ACN14a), this protein is Transcriptional regulator MraZ.